The following is a 334-amino-acid chain: N-acetyl-gamma-glutamyl-phosphate reductase (334 aa).

Cys154 is an active-site residue.

The protein belongs to the NAGSA dehydrogenase family. Type 1 subfamily.

Its subcellular location is the cytoplasm. The catalysed reaction is N-acetyl-L-glutamate 5-semialdehyde + phosphate + NADP(+) = N-acetyl-L-glutamyl 5-phosphate + NADPH + H(+). It functions in the pathway amino-acid biosynthesis; L-arginine biosynthesis; N(2)-acetyl-L-ornithine from L-glutamate: step 3/4. In terms of biological role, catalyzes the NADPH-dependent reduction of N-acetyl-5-glutamyl phosphate to yield N-acetyl-L-glutamate 5-semialdehyde. The polypeptide is N-acetyl-gamma-glutamyl-phosphate reductase (Vibrio vulnificus (strain YJ016)).